Reading from the N-terminus, the 286-residue chain is MSVKDKLEIYLRLARMDRPIGTLLLMWPCLMALVLAAGGMPDLKVLVIFIIGVVVMRACGCIINDYADRKLDSHVERTKSRPLASGEVSVKEALTLFVVMGLIAFGLVLMLNPLVVQLSFVGIILTIIYPFTKRFTNMPQMFLGVVWSWSIPMAYAAQTGTVPAEAWWLFAANWCWTVAYDTMYAMVDRDDDLKVGIKSTAILFGKYDRQVIALFQLAALACFIIAGWAADRGLVYALGIITFVGFSLYQQKLIYGRERAPCFKAFLNNNWAGLSLFVALGVDYLV.

7 helical membrane-spanning segments follow: residues 20–40, 43–63, 96–116, 142–162, 167–187, 210–230, and 234–254; these read IGTL…AGGM, LKVL…GCII, LFVV…PLVV, FLGV…TGTV, WWLF…YAMV, QVIA…GWAA, and LVYA…QKLI.

It belongs to the UbiA prenyltransferase family. Mg(2+) is required as a cofactor.

Its subcellular location is the cell inner membrane. It catalyses the reaction all-trans-octaprenyl diphosphate + 4-hydroxybenzoate = 4-hydroxy-3-(all-trans-octaprenyl)benzoate + diphosphate. The protein operates within cofactor biosynthesis; ubiquinone biosynthesis. Catalyzes the prenylation of para-hydroxybenzoate (PHB) with an all-trans polyprenyl group. Mediates the second step in the final reaction sequence of ubiquinone-8 (UQ-8) biosynthesis, which is the condensation of the polyisoprenoid side chain with PHB, generating the first membrane-bound Q intermediate 3-octaprenyl-4-hydroxybenzoate. The protein is 4-hydroxybenzoate octaprenyltransferase of Shewanella woodyi (strain ATCC 51908 / MS32).